The sequence spans 219 residues: Uracil-DNA glycosylase (219 aa).

Residue Asp-59 is the Proton acceptor of the active site.

Belongs to the uracil-DNA glycosylase (UDG) superfamily. UNG family.

It localises to the cytoplasm. It catalyses the reaction Hydrolyzes single-stranded DNA or mismatched double-stranded DNA and polynucleotides, releasing free uracil.. Its function is as follows. Excises uracil residues from the DNA which can arise as a result of misincorporation of dUMP residues by DNA polymerase or due to deamination of cytosine. The polypeptide is Uracil-DNA glycosylase (Macrococcus caseolyticus (strain JCSC5402) (Macrococcoides caseolyticum)).